A 362-amino-acid polypeptide reads, in one-letter code: MSQNSLRLVEDKTVDKSKALEAALSQIERSFGKGSIMKLGANEKIVEVETVSTGSLSLDIALGIGGLPKGRIIEIYGPESSGKTTLALQTIAEAQKKGGVCAFVDAEHALDPVYARKLGVDLQNLLISQPDTGEQALEITDTLVRSGAIDVLVIDSVAALTPKAEIEGEMGDSLPGMQARLMSQALRKLTGSISRSNCMVVFINQIRMKIGVMFGSPETTTGGNALKFYASVRLDIRRIGAVKDREEIVGNQTRVKVVKNKMAPPFKQVEFDIMYGEGVSKTGELVDLGVKAGIVEKAGAWFSYNSQRLGQGRENAKIFLRDNPAVADEIETALRQNAGLIAERFLENGGPDANDSVGLDDA.

77–84 (GPESSGKT) is a binding site for ATP.

It belongs to the RecA family.

The protein localises to the cytoplasm. Functionally, can catalyze the hydrolysis of ATP in the presence of single-stranded DNA, the ATP-dependent uptake of single-stranded DNA by duplex DNA, and the ATP-dependent hybridization of homologous single-stranded DNAs. It interacts with LexA causing its activation and leading to its autocatalytic cleavage. In Allorhizobium ampelinum (strain ATCC BAA-846 / DSM 112012 / S4) (Agrobacterium vitis (strain S4)), this protein is Protein RecA.